We begin with the raw amino-acid sequence, 212 residues long: Fibrillarin-like rRNA/tRNA 2'-O-methyltransferase (212 aa).

S-adenosyl-L-methionine is bound by residues 73–74 (TT), 91–92 (EI), 116–117 (DA), and 136–139 (DVAQ).

This sequence belongs to the methyltransferase superfamily. Fibrillarin family. In terms of assembly, interacts with nop5. Component of box C/D small ribonucleoprotein (sRNP) particles that contain rpl7ae, FlpA and nop5, plus a guide RNA.

Its function is as follows. Involved in pre-rRNA and tRNA processing. Utilizes the methyl donor S-adenosyl-L-methionine to catalyze the site-specific 2'-hydroxyl methylation of ribose moieties in rRNA and tRNA. Site specificity is provided by a guide RNA that base pairs with the substrate. Methylation occurs at a characteristic distance from the sequence involved in base pairing with the guide RNA. The protein is Fibrillarin-like rRNA/tRNA 2'-O-methyltransferase of Methanothrix thermoacetophila (strain DSM 6194 / JCM 14653 / NBRC 101360 / PT) (Methanosaeta thermophila).